An 810-amino-acid chain; its full sequence is Chloride channel protein (810 aa).

Topologically, residues Ser-2–Leu-48 are cytoplasmic. The next 2 helical transmembrane spans lie at Gly-49–Met-86 and Leu-93–Val-116. A Selectivity filter part_1 motif is present at residues Gly-122–Pro-126. Ser-123 contributes to the chloride binding site. Residues Ile-125–Ile-132 constitute an intramembrane region (helical). Transmembrane regions (helical) follow at residues Leu-141–Gly-160 and Glu-166–Leu-184. The Selectivity filter part_2 signature appears at Gly-164–Pro-168. Intramembrane regions (helical) lie at residues Ile-201–Cys-213 and Pro-217–Ile-225. 3 consecutive transmembrane segments (helical) span residues Tyr-237–Leu-254, Leu-283–Met-311, and Ile-320–Leu-339. Asn-365 carries an N-linked (GlcNAc...) asparagine glycan. 2 consecutive transmembrane segments (helical) span residues Asn-389 to Ala-408 and Gly-416 to Leu-439. The short motif at Gly-416–Pro-420 is the Selectivity filter part_3 element. Residue Phe-418 participates in chloride binding. Residues Gly-456 to Val-470 constitute an intramembrane region (helical). Positions Thr-471–His-472 form an intramembrane region, note=Loop between two helices. The segment at residues Ala-473–Thr-484 is an intramembrane region (helical). An intramembrane region (note=Loop between two helices) is located at residues Gly-485–His-489. A helical transmembrane segment spans residues Val-490 to Gly-506. Residues Leu-507–Lys-810 are Cytoplasmic-facing. Tyr-512 is a chloride binding site. A CBS 1 domain is found at Met-543–Ala-601. Disordered stretches follow at residues Arg-604–Gly-631 and Lys-658–Gly-688. Residues Ile-724–Phe-781 form the CBS 2 domain.

This sequence belongs to the chloride channel (TC 2.A.49) family. ClC-0 subfamily. Homodimer. Each subunit has channel activity ('Double barreled channel').

The protein localises to the membrane. Functionally, voltage-gated chloride channel. This channel is thought to ensure the high conductance of the non-innervated membrane of the electrocyte necessary for efficient current generation caused by sodium influx through the acetylcholine receptor at the innervated membrane. The sequence is that of Chloride channel protein from Tetronarce californica (Pacific electric ray).